The sequence spans 418 residues: Vasopressin V1a receptor (418 aa).

Over residues 1–15 the composition is skewed to low complexity; that stretch reads MRFSGSPSPGPSNSS. Positions 1–20 are disordered; it reads MRFSGSPSPGPSNSSRWWPL. Residues 1 to 51 are Extracellular-facing; sequence MRFSGSPSPGPSNSSRWWPLDAGDANTSGDLAGLGEDGGPQADTRNEELAK. Residues N13 and N26 are each glycosylated (N-linked (GlcNAc...) asparagine). A helical transmembrane segment spans residues 52 to 75; sequence LEIAVLAVIFVVAVLGNSSVLLAL. Over 76-87 the chain is Cytoplasmic; that stretch reads HRTPRKTSRMHL. A helical transmembrane segment spans residues 88-109; sequence FIRHLSLADLAVAFFQVLPQLG. The Extracellular segment spans residues 110–124; that stretch reads WDITYRFRGPDGLCR. A disulfide bond links C123 and C202. The chain crosses the membrane as a helical span at residues 125–146; it reads VVKHMQVFAMFASAYMLVVMTA. At 147 to 167 the chain is on the cytoplasmic side; it reads DRYIAVCHPLKTLQQPARRSR. The helical transmembrane segment at 168 to 189 threads the bilayer; the sequence is LMIAAAWVLSFVLSTPQYFVFS. The Extracellular portion of the chain corresponds to 190 to 217; the sequence is MVEVSNVTKTYDCWANFIHPWGLPAYVT. N195 carries an N-linked (GlcNAc...) asparagine glycan. Residues 218 to 238 form a helical membrane-spanning segment; that stretch reads WMTGSVFVAPVVILGTCYGFI. Residues 239 to 293 are Cytoplasmic-facing; that stretch reads CYHIWRKVRGKTAGRQGGPAEGAGESALYRGVLHARCVSSVKTISRAKIRTVKMT. A helical membrane pass occupies residues 294-313; the sequence is FVIVTAYIVCWAPFFIIQMW. Topologically, residues 314 to 331 are extracellular; it reads SAWDKNFSWVESENPATA. An N-linked (GlcNAc...) asparagine glycan is attached at N319. Residues 332-351 traverse the membrane as a helical segment; it reads IPALLASLNSCCNPWIYMFF. At 352 to 418 the chain is on the cytoplasmic side; it reads SGHLLQDCAQ…KSIKFIPVST (67 aa). 2 S-palmitoyl cysteine lipidation sites follow: C365 and C366. Positions 377 to 418 are disordered; that stretch reads GSDSMSRRQTSFTNNRSPTNSMGTWKDSPKSSKSIKFIPVST. Polar residues predominate over residues 383–399; the sequence is RRQTSFTNNRSPTNSMG. S404 is modified (phosphoserine).

The protein belongs to the G-protein coupled receptor 1 family. Vasopressin/oxytocin receptor subfamily.

Its subcellular location is the cell membrane. In terms of biological role, receptor for arginine vasopressin. The activity of this receptor is mediated by G proteins which activate a phosphatidyl-inositol-calcium second messenger system. This is Vasopressin V1a receptor (AVPR1A) from Ovis aries (Sheep).